Reading from the N-terminus, the 124-residue chain is Small ribosomal subunit protein uS12c (124 aa).

Disordered stretches follow at residues 1–28 and 104–124; these read MPTIQQLVRSERRKINKKTKSPALKSCP and AAGVKDRRKSRSKYGTKKPKS. Composition is skewed to basic residues over residues 11-20 and 109-124; these read ERRKINKKTK and DRRKSRSKYGTKKPKS.

It belongs to the universal ribosomal protein uS12 family. In terms of assembly, part of the 30S ribosomal subunit.

The protein resides in the plastid. The protein localises to the chloroplast. Its function is as follows. With S4 and S5 plays an important role in translational accuracy. Located at the interface of the 30S and 50S subunits. The sequence is that of Small ribosomal subunit protein uS12c (rps12) from Porphyra purpurea (Red seaweed).